Consider the following 556-residue polypeptide: Formate--tetrahydrofolate ligase (556 aa).

ATP is bound at residue 64–71 (TPAGEGKT).

Belongs to the formate--tetrahydrofolate ligase family.

It carries out the reaction (6S)-5,6,7,8-tetrahydrofolate + formate + ATP = (6R)-10-formyltetrahydrofolate + ADP + phosphate. The protein operates within one-carbon metabolism; tetrahydrofolate interconversion. This is Formate--tetrahydrofolate ligase from Haemophilus ducreyi (strain 35000HP / ATCC 700724).